The primary structure comprises 339 residues: Serpentine receptor class gamma-7 (339 aa).

A run of 7 helical transmembrane segments spans residues Y30–T50, W65–V85, F98–Y118, I152–I172, L200–M220, S239–F259, and F268–F288. A disordered region spans residues P319–A339.

It belongs to the nematode receptor-like protein srg family.

Its subcellular location is the membrane. The chain is Serpentine receptor class gamma-7 (srg-7) from Caenorhabditis elegans.